Reading from the N-terminus, the 477-residue chain is Bifunctional protein HldE (477 aa).

Positions 1–318 (MKVNLPAFER…ENAVRGRADT (318 aa)) are ribokinase. An ATP-binding site is contributed by 195–198 (NLSE). Residue Asp-264 is part of the active site. Positions 344 to 477 (MTNGVFDILH…IKKIQTESEK (134 aa)) are cytidylyltransferase.

This sequence in the N-terminal section; belongs to the carbohydrate kinase PfkB family. The protein in the C-terminal section; belongs to the cytidylyltransferase family. Homodimer.

It catalyses the reaction D-glycero-beta-D-manno-heptose 7-phosphate + ATP = D-glycero-beta-D-manno-heptose 1,7-bisphosphate + ADP + H(+). The catalysed reaction is D-glycero-beta-D-manno-heptose 1-phosphate + ATP + H(+) = ADP-D-glycero-beta-D-manno-heptose + diphosphate. It participates in nucleotide-sugar biosynthesis; ADP-L-glycero-beta-D-manno-heptose biosynthesis; ADP-L-glycero-beta-D-manno-heptose from D-glycero-beta-D-manno-heptose 7-phosphate: step 1/4. The protein operates within nucleotide-sugar biosynthesis; ADP-L-glycero-beta-D-manno-heptose biosynthesis; ADP-L-glycero-beta-D-manno-heptose from D-glycero-beta-D-manno-heptose 7-phosphate: step 3/4. In terms of biological role, catalyzes the phosphorylation of D-glycero-D-manno-heptose 7-phosphate at the C-1 position to selectively form D-glycero-beta-D-manno-heptose-1,7-bisphosphate. Its function is as follows. Catalyzes the ADP transfer from ATP to D-glycero-beta-D-manno-heptose 1-phosphate, yielding ADP-D-glycero-beta-D-manno-heptose. In Salmonella paratyphi A (strain ATCC 9150 / SARB42), this protein is Bifunctional protein HldE.